The chain runs to 174 residues: Peptide deformylase (174 aa).

The Fe cation site is built by C91 and H133. E134 is a catalytic residue. Position 137 (H137) interacts with Fe cation.

This sequence belongs to the polypeptide deformylase family. Fe(2+) serves as cofactor.

It catalyses the reaction N-terminal N-formyl-L-methionyl-[peptide] + H2O = N-terminal L-methionyl-[peptide] + formate. Removes the formyl group from the N-terminal Met of newly synthesized proteins. Requires at least a dipeptide for an efficient rate of reaction. N-terminal L-methionine is a prerequisite for activity but the enzyme has broad specificity at other positions. This Fusobacterium nucleatum subsp. nucleatum (strain ATCC 25586 / DSM 15643 / BCRC 10681 / CIP 101130 / JCM 8532 / KCTC 2640 / LMG 13131 / VPI 4355) protein is Peptide deformylase.